A 251-amino-acid chain; its full sequence is MESHIYRIIKNKLTIIIFTIIILIPCVDISLLLMTNTEYHPAYAFFLSGTSVGHASQMILLWFLPLYFLLLCADDSIQDYKTGYHYILISKVGRKKYCLEKIFTSFIISFLTMFLSLILNFLLVQVFFFKGTFKNDLDQIKFPDNSLYTFSMAHPYIAIVLFSIICCIMSGFVGALGSSLSLLFRDKKYAYPASFFIWFVLILKNKSLMFLFQPFTEYGYNVLLPILCLSIFIFLIIISSIVLYEAKYNEN.

This is an uncharacterized protein from Bacillus subtilis (strain 168).